Reading from the N-terminus, the 176-residue chain is Nucleoside triphosphate/diphosphate phosphatase (176 aa).

Arginine 23 acts as the Proton donor in catalysis. Mg(2+) is bound by residues asparagine 87, aspartate 103, aspartate 105, aspartate 107, aspartate 120, and glutamate 123.

It belongs to the Ntdp family. It depends on Mg(2+) as a cofactor.

It catalyses the reaction a ribonucleoside 5'-triphosphate + H2O = a ribonucleoside 5'-diphosphate + phosphate + H(+). The enzyme catalyses a ribonucleoside 5'-diphosphate + H2O = a ribonucleoside 5'-phosphate + phosphate + H(+). Functionally, has nucleoside phosphatase activity towards nucleoside triphosphates and nucleoside diphosphates. This Bacillus velezensis (strain DSM 23117 / BGSC 10A6 / LMG 26770 / FZB42) (Bacillus amyloliquefaciens subsp. plantarum) protein is Nucleoside triphosphate/diphosphate phosphatase.